The sequence spans 629 residues: MVAPQRRTVMPALGLLASSLCSLLLTANAATVEQHWNINWVPDVNPDGLYPRHVIGVNGSWPPPIINVNASDTVRITATNKLETGVGASLHSHGMFFNRTGYYDGAVAITQCPIPPGQSFTYETLNSPASPADRRKQMGTFWIHAHNNDQYTDGLRSPVIIHPDDPADIHYNYDDDYTVILGDWYHSNYTDLVKNEFMNRKNPTGAEPVPKSGLIYFAHTSNKTSAATYLPGFSENATLPFEAGKTYRLRVINMSALAAFYFYLSGHDMQVIEVEGVDVLPQPVDFLSVAVAQRFSVLVTARNDTDPQNWKLHANMDEDMFDVVPEDLQLNVSATISYPNAPKDKFGPEKILEEYTYFDDLQFVPVNAEPMVTPDAVHRLDVSFDTMSDGENYAAFNNISYVAPQVPALFSAESMGALASNPAIYGPNSNAFVIKHNEMIEVQLFNWDAGKHPFHLHGHHFQVVHKSQDVTSDDPTINPPFNSSQVNPMRRDTVMVPPGGSAYLRFRADNPGAWFFHCHIDPHLVSGLASIFIEAPDVLSDSFLNVPSYIKNQCQAQGIATTGNAVGLNSTSDFDGLAKGPTYLESGWTGRAIAAFTGCIITGLLGLATVVVYGWHSGEEDDDEEEEDK.

Positions Met1 to Ala29 are cleaved as a signal peptide. 2 consecutive Plastocyanin-like domains span residues Val44–Asp164 and Asp175–Tyr338. 2 N-linked (GlcNAc...) asparagine glycosylation sites follow: Asn58 and Asn69. Positions 91 and 93 each coordinate Cu cation. N-linked (GlcNAc...) asparagine glycosylation is present at Asn98. His144 and His146 together coordinate Cu cation. N-linked (GlcNAc...) asparagine glycans are attached at residues Asn188, Asn222, Asn236, Asn253, Asn303, Asn331, and Asn398. One can recognise a Plastocyanin-like 3 domain in the interval Tyr401–Asp537. His452, His455, and His457 together coordinate Cu cation. An N-linked (GlcNAc...) asparagine glycan is attached at Asn482. Residues His517, Cys518, His519, and His523 each coordinate Cu cation. A glycan (N-linked (GlcNAc...) asparagine) is linked at Asn569. Residues Ala592–Val612 form a helical membrane-spanning segment.

It belongs to the multicopper oxidase family. The cofactor is Cu cation.

The protein localises to the cell membrane. Iron transport multicopper oxidase, which is required for Fe(2+) high affinity uptake. May be required to oxidize Fe(2+) and release it from the transporter. Essential component of copper-dependent iron transport. This is Iron multicopper oxidase fer1 from Mycosarcoma maydis (Corn smut fungus).